Here is a 95-residue protein sequence, read N- to C-terminus: Signal recognition particle 19 kDa protein (95 aa).

The protein belongs to the SRP19 family. Part of the signal recognition particle protein translocation system, which is composed of SRP and FtsY. Archaeal SRP consists of a 7S RNA molecule of 300 nucleotides and two protein subunits: SRP54 and SRP19.

It localises to the cytoplasm. Its function is as follows. Involved in targeting and insertion of nascent membrane proteins into the cytoplasmic membrane. Binds directly to 7S RNA and mediates binding of the 54 kDa subunit of the SRP. This is Signal recognition particle 19 kDa protein from Pyrobaculum islandicum (strain DSM 4184 / JCM 9189 / GEO3).